Consider the following 613-residue polypeptide: MSVQVVSAAAAAKVPEVELKDLSPSEAEPQLGLSAAAVGAMVPPAGGGDPEAPAPAPAAERPPAPGPGSGPTAALSPAAGKVPQASAMKRSDPHHQHQRHRDGGEALVSPDGTVTEAPRTVKKQIQFADQKQEFNKRPTKIGRRSLSRSISQSSTDSYSSAASYTDSSDDETSPRDKQQKNSKGSSDFCVKNIKQAEFGRREIEIAEQEMPALMALRKRAQGEKPLAGAKIVGCTHITAQTAVLMETLGALGAQCRWAACNIYSTLNEVAAALAESGFPVFAWKGESEDDFWWCIDRCVNVEGWQPNMILDDGGDLTHWIYKKYPNMFKKIKGIVEESVTGVHRLYQLSKAGKLCVPAMNVNDSVTKQKFDNLYCCRESILDGLKRTTDMMFGGKQVVVCGYGEVGKGCCAALKAMGSIVYVTEIDPICALQACMDGFRLVKLNEVIRQVDIVITCTGNKNVVTREHLDRMKNSCIVCNMGHSNTEIDVASLRTPELTWERVRSQVDHVIWPDGKRIVLLAEGRLLNLSCSTVPTFVLSITATTQALALIELYNAPEGRYKQDVYLLPKKMDEYVASLHLPTFDAHLTELTDEQAKYLGLNKNGPFKPNYYRY.

Low complexity-rich tracts occupy residues 1–14 (MSVQ…AAKV) and 35–44 (AAAVGAMVPP). Positions 1–186 (MSVQVVSAAA…KQQKNSKGSS (186 aa)) are disordered. N-acetylserine is present on Ser-2. Residues 2 to 111 (SVQVVSAAAA…DGGEALVSPD (110 aa)) form an LISN domain, inhibits interaction with ITPR1 region. Positions 52 to 68 (APAPAPAAERPPAPGPG) are enriched in pro residues. Low complexity predominate over residues 70–80 (GPTAALSPAAG). At Ser-109 the chain carries Phosphoserine. A compositionally biased stretch (basic residues) spans 137 to 146 (RPTKIGRRSL). Residues 147 to 166 (SRSISQSSTDSYSSAASYTD) are compositionally biased toward low complexity. Residues Ser-151, Ser-154, Ser-157, and Ser-160 each carry the phosphoserine modification. Residues Thr-238, Asp-312, and Glu-337 each contribute to the substrate site. Residue 338-340 (SVT) coordinates NAD(+). 2 residues coordinate substrate: Lys-367 and Asp-371. NAD(+) is bound by residues Asn-372, 403 to 408 (GEVGKG), Glu-424, Asn-459, 480 to 482 (MGH), and Asn-527.

Belongs to the adenosylhomocysteinase family. In terms of assembly, homotetramer. Forms heteromultimers with AHCYL1 (via the C-terminal region). Interacts with ITPR1; with lower affinity than AHCYL1 and maybe via ITPR1. Interacts with SLC4A4. Interacts with ZCCHC4. NAD(+) serves as cofactor. Post-translationally, phosphorylated during neuronal differentiation at the LISN domain. Highly expressed in cerebrum, cerebellum and kidney. Also expressed in thymus, spleen, testis, ovary and, at lower, levels in lung and liver (at protein level). In cerebellum, expressed in interneurons.

Its subcellular location is the cytoplasm. It localises to the microsome. The catalysed reaction is S-adenosyl-L-homocysteine + H2O = L-homocysteine + adenosine. It functions in the pathway amino-acid biosynthesis; L-homocysteine biosynthesis; L-homocysteine from S-adenosyl-L-homocysteine: step 1/1. Functionally, may regulate the electrogenic sodium/bicarbonate cotransporter SLC4A4 activity and Mg(2+)-sensitivity. On the contrary of its homolog AHCYL1, does not regulate ITPR1 sensitivity to inositol 1,4,5-trisphosphate. This chain is Putative adenosylhomocysteinase 3 (Ahcyl2), found in Mus musculus (Mouse).